The chain runs to 105 residues: Met repressor (105 aa).

The protein belongs to the MetJ family. As to quaternary structure, homodimer.

The protein localises to the cytoplasm. This regulatory protein, when combined with SAM (S-adenosylmethionine) represses the expression of the methionine regulon and of enzymes involved in SAM synthesis. In Salmonella dublin (strain CT_02021853), this protein is Met repressor.